The sequence spans 763 residues: Endothelin-converting enzyme 2 (763 aa).

Residues 1–60 (MNVALHELGGGGSMVEYKRAKLRDEESPEITVEGRATRDSLEVGFQKRTRQLFGSHTQLE) lie on the Cytoplasmic side of the membrane. A Phosphoserine modification is found at Ser-27. The helical; Signal-anchor for type II membrane protein transmembrane segment at 61–81 (LVLAGLILVLAALLLGCLVAL) threads the bilayer. Over 82–763 (WVHRDPAHST…MNPGQLCEVW (682 aa)) the chain is Lumenal. In terms of domain architecture, Peptidase M13 spans 91 to 763 (TCVTEACIRV…MNPGQLCEVW (673 aa)). 5 disulfide bridges follow: Cys-92–Cys-97, Cys-115–Cys-748, Cys-123–Cys-708, Cys-179–Cys-428, and Cys-637–Cys-760. 7 N-linked (GlcNAc...) asparagine glycosylation sites follow: Asn-159, Asn-163, Asn-204, Asn-264, Asn-309, Asn-376, and Asn-532. Zn(2+) is bound at residue His-600. Glu-601 is a catalytic residue. Residue His-604 participates in Zn(2+) binding. Asn-625 and Asn-633 each carry an N-linked (GlcNAc...) asparagine glycan. Residue Glu-660 participates in Zn(2+) binding. Catalysis depends on Asp-664, which acts as the Proton donor.

The protein belongs to the peptidase M13 family. Requires Zn(2+) as cofactor.

It localises to the golgi apparatus membrane. Its subcellular location is the cytoplasmic vesicle. It is found in the secretory vesicle membrane. It catalyses the reaction Hydrolysis of the 21-Trp-|-Val-22 bond in big endothelin to form endothelin 1.. Its function is as follows. Converts big endothelin-1 to endothelin-1. Also involved in the processing of various neuroendocrine peptides, including neurotensin, angiotensin I, substance P, proenkephalin-derived peptides, and prodynorphin-derived peptides. May play a role in amyloid-beta processing. The chain is Endothelin-converting enzyme 2 from Mus musculus (Mouse).